Consider the following 206-residue polypeptide: Putative NAD(P)H nitroreductase MhqN (206 aa).

FMN-binding positions include 11–13 (RRS), 68–70 (QYK), 157–158 (IG), Arg193, and Arg196.

This sequence belongs to the nitroreductase family. Homodimer. The cofactor is FMN.

The protein resides in the cytoplasm. Putative nitroreductase that may contribute to the degradation of aromatic compounds. The sequence is that of Putative NAD(P)H nitroreductase MhqN (mhqN) from Bacillus subtilis (strain 168).